The sequence spans 115 residues: Na(+)/H(+) antiporter subunit C1 (115 aa).

3 helical membrane passes run 1 to 21, 28 to 48, and 72 to 92; these read MEII…YLVL, IIMG…TMGG, and LILT…VLAF.

The protein belongs to the CPA3 antiporters (TC 2.A.63) subunit C family. May form a heterooligomeric complex that consists of seven subunits: mnhA1, mnhB1, mnhC1, mnhD1, mnhE1, mnhF1 and mnhG1.

The protein resides in the cell membrane. Mnh complex is a Na(+)/H(+) antiporter involved in Na(+) excretion. This chain is Na(+)/H(+) antiporter subunit C1 (mnhC1), found in Staphylococcus epidermidis (strain ATCC 35984 / DSM 28319 / BCRC 17069 / CCUG 31568 / BM 3577 / RP62A).